We begin with the raw amino-acid sequence, 410 residues long: Lissencephaly-1 homolog (410 aa).

One can recognise a LisH domain in the interval 7-39 (QRDELNRAIADYLRSNGYEEAYSVFKKEAELDM). Residues 56 to 82 (TSVIRLQKKVMELESKLNEAKEEFTSG) are a coiled coil. WD repeat units lie at residues 106-147 (GHRS…RTLK), 148-189 (GHTD…RTMH), 190-229 (GHDH…CVKT), 232-271 (GHRE…CKAE), 274-333 (EHEH…CLMT), 336-377 (GHDN…KTLN), and 379-410 (HEHF…WECR).

Belongs to the WD repeat LIS1/nudF family. As to quaternary structure, can self-associate. Component of the cytosolic PAF-AH (I) heterotetrameric enzyme, which is composed of PAFAH1B1 (beta), PAFAH1B2 (alpha2) and PAFAH1B3 (alpha1) subunits. The catalytic activity of the enzyme resides in the alpha1 (PAFAH1B3) and alpha2 (PAFAH1B2) subunits, whereas the beta subunit (PAFAH1B1) has regulatory activity. Trimer formation is not essential for the catalytic activity. Interacts with dynein, dynactin, nde1 and ndel1.

The protein resides in the cytoplasm. It is found in the cytoskeleton. Its subcellular location is the microtubule organizing center. It localises to the centrosome. In terms of biological role, regulatory subunit (beta subunit) of the cytosolic type I platelet-activating factor (PAF) acetylhydrolase (PAF-AH (I)), an enzyme that catalyzes the hydrolyze of the acetyl group at the sn-2 position of PAF and its analogs and participates in PAF inactivation. Regulates the PAF-AH (I) activity in a catalytic dimer composition-dependent manner. Positively regulates the activity of the minus-end directed microtubule motor protein dynein. May enhance dynein-mediated microtubule sliding by targeting dynein to the microtubule plus end. Required for several dynein- and microtubule-dependent processes such as the maintenance of Golgi integrity, the peripheral transport of microtubule fragments and the coupling of the nucleus and centrosome. May be required for proliferation of neuronal precursors and neuronal migration. The chain is Lissencephaly-1 homolog (pafah1b1) from Xenopus laevis (African clawed frog).